A 464-amino-acid chain; its full sequence is 3-isopropylmalate dehydratase large subunit (464 aa).

Positions 337, 397, and 400 each coordinate [4Fe-4S] cluster.

This sequence belongs to the aconitase/IPM isomerase family. LeuC type 1 subfamily. Heterodimer of LeuC and LeuD. [4Fe-4S] cluster is required as a cofactor.

The enzyme catalyses (2R,3S)-3-isopropylmalate = (2S)-2-isopropylmalate. The protein operates within amino-acid biosynthesis; L-leucine biosynthesis; L-leucine from 3-methyl-2-oxobutanoate: step 2/4. Catalyzes the isomerization between 2-isopropylmalate and 3-isopropylmalate, via the formation of 2-isopropylmaleate. This Bacillus thuringiensis subsp. konkukian (strain 97-27) protein is 3-isopropylmalate dehydratase large subunit.